A 132-amino-acid chain; its full sequence is Small ribosomal subunit protein uS8 (132 aa).

The protein belongs to the universal ribosomal protein uS8 family. Part of the 30S ribosomal subunit. Contacts proteins S5 and S12.

Its function is as follows. One of the primary rRNA binding proteins, it binds directly to 16S rRNA central domain where it helps coordinate assembly of the platform of the 30S subunit. The polypeptide is Small ribosomal subunit protein uS8 (Stenotrophomonas maltophilia (strain K279a)).